The sequence spans 476 residues: Aspartyl/glutamyl-tRNA(Asn/Gln) amidotransferase subunit B (476 aa).

This sequence belongs to the GatB/GatE family. GatB subfamily. As to quaternary structure, heterotrimer of A, B and C subunits.

It catalyses the reaction L-glutamyl-tRNA(Gln) + L-glutamine + ATP + H2O = L-glutaminyl-tRNA(Gln) + L-glutamate + ADP + phosphate + H(+). The enzyme catalyses L-aspartyl-tRNA(Asn) + L-glutamine + ATP + H2O = L-asparaginyl-tRNA(Asn) + L-glutamate + ADP + phosphate + 2 H(+). In terms of biological role, allows the formation of correctly charged Asn-tRNA(Asn) or Gln-tRNA(Gln) through the transamidation of misacylated Asp-tRNA(Asn) or Glu-tRNA(Gln) in organisms which lack either or both of asparaginyl-tRNA or glutaminyl-tRNA synthetases. The reaction takes place in the presence of glutamine and ATP through an activated phospho-Asp-tRNA(Asn) or phospho-Glu-tRNA(Gln). The sequence is that of Aspartyl/glutamyl-tRNA(Asn/Gln) amidotransferase subunit B from Listeria innocua serovar 6a (strain ATCC BAA-680 / CLIP 11262).